The following is a 289-amino-acid chain: Diaminopimelate epimerase (289 aa).

Substrate-binding residues include asparagine 13, glutamine 47, and asparagine 67. Residue cysteine 76 is the Proton donor of the active site. Substrate is bound by residues 77–78, asparagine 167, asparagine 200, and 218–219; these read GN and ER. Cysteine 227 (proton acceptor) is an active-site residue. 228 to 229 is a binding site for substrate; the sequence is GT.

This sequence belongs to the diaminopimelate epimerase family. Homodimer.

Its subcellular location is the cytoplasm. It catalyses the reaction (2S,6S)-2,6-diaminopimelate = meso-2,6-diaminopimelate. It participates in amino-acid biosynthesis; L-lysine biosynthesis via DAP pathway; DL-2,6-diaminopimelate from LL-2,6-diaminopimelate: step 1/1. Its function is as follows. Catalyzes the stereoinversion of LL-2,6-diaminopimelate (L,L-DAP) to meso-diaminopimelate (meso-DAP), a precursor of L-lysine and an essential component of the bacterial peptidoglycan. The protein is Diaminopimelate epimerase of Burkholderia thailandensis (strain ATCC 700388 / DSM 13276 / CCUG 48851 / CIP 106301 / E264).